We begin with the raw amino-acid sequence, 85 residues long: Senescence-associated and QQS-related protein (85 aa).

The segment covering 1–24 has biased composition (basic and acidic residues); sequence MSFRKVEKKPTEMGRNMTHEKSDS. Disordered regions lie at residues 1 to 35 and 55 to 85; these read MSFR…PMTV and SGKA…FPNY. Residues 58 to 77 are compositionally biased toward polar residues; it reads ARSNYNLTGTAKGTGPINSF.

As to expression, expressed predominantly within leaves and cotyledons vasculatures. Mainly observed in fully expanded leaves, at the base of mature inflorescences, in senescing leaves and cauline leaves, and, to a lower extent, in hypocotyls and rosette leaves prior to flowering.

In terms of biological role, plays a role in carbon allocation, including during senescence and stresses, thus impacting starch accumulation. This Arabidopsis thaliana (Mouse-ear cress) protein is Senescence-associated and QQS-related protein.